A 235-amino-acid polypeptide reads, in one-letter code: 2-C-methyl-D-erythritol 4-phosphate cytidylyltransferase (235 aa).

Belongs to the IspD/TarI cytidylyltransferase family. IspD subfamily.

It carries out the reaction 2-C-methyl-D-erythritol 4-phosphate + CTP + H(+) = 4-CDP-2-C-methyl-D-erythritol + diphosphate. Its pathway is isoprenoid biosynthesis; isopentenyl diphosphate biosynthesis via DXP pathway; isopentenyl diphosphate from 1-deoxy-D-xylulose 5-phosphate: step 2/6. Functionally, catalyzes the formation of 4-diphosphocytidyl-2-C-methyl-D-erythritol from CTP and 2-C-methyl-D-erythritol 4-phosphate (MEP). The protein is 2-C-methyl-D-erythritol 4-phosphate cytidylyltransferase of Pseudomonas putida (strain ATCC 700007 / DSM 6899 / JCM 31910 / BCRC 17059 / LMG 24140 / F1).